Here is a 144-residue protein sequence, read N- to C-terminus: MEKTFFMIKPDGVRRGLIGEVLQRIERRGFTLDALQLVTPSREHLDEHYHQLKDKAFYPGLIDYMMSGPILIGVISGNEVIESWRTMMGKTNPKDAAPGTIRGDFAQAPDENGEMMNVVHGSDSRDSAKREIELWLGHLTAENK.

Residues Lys9, Phe57, Arg85, Thr91, Arg102, and Asn112 each coordinate ATP. Catalysis depends on His120, which acts as the Pros-phosphohistidine intermediate.

This sequence belongs to the NDK family. In terms of assembly, homotetramer. Mg(2+) serves as cofactor.

It is found in the cytoplasm. The catalysed reaction is a 2'-deoxyribonucleoside 5'-diphosphate + ATP = a 2'-deoxyribonucleoside 5'-triphosphate + ADP. The enzyme catalyses a ribonucleoside 5'-diphosphate + ATP = a ribonucleoside 5'-triphosphate + ADP. Functionally, major role in the synthesis of nucleoside triphosphates other than ATP. The ATP gamma phosphate is transferred to the NDP beta phosphate via a ping-pong mechanism, using a phosphorylated active-site intermediate. The polypeptide is Nucleoside diphosphate kinase (Streptococcus uberis (strain ATCC BAA-854 / 0140J)).